The primary structure comprises 428 residues: Histone deacetylase 3 (428 aa).

Residues 3 to 316 (KTVAYFYDPD…WTYETSLLVD (314 aa)) form a histone deacetylase region. 1D-myo-inositol 1,4,5,6-tetrakisphosphate-binding residues include histidine 17, glycine 21, and lysine 25. Histidine 135 is an active-site residue. Residues aspartate 170, histidine 172, and aspartate 259 each contribute to the Zn(2+) site. Residue arginine 265 participates in 1D-myo-inositol 1,4,5,6-tetrakisphosphate binding. 2 stretches are compositionally biased toward basic and acidic residues: residues 386-405 (SYER…DNYS) and 415-428 (DGDH…DVEI). Positions 386 to 428 (SYERTDEPDPEERGSEDNYSRPEASNEFYDGDHDNDKESDVEI) are disordered.

This sequence belongs to the histone deacetylase family. HD type 1 subfamily.

Its subcellular location is the nucleus. The protein localises to the chromosome. It is found in the cytoplasm. It localises to the cytosol. The enzyme catalyses N(6)-acetyl-L-lysyl-[histone] + H2O = L-lysyl-[histone] + acetate. The catalysed reaction is N(6)-acetyl-L-lysyl-[protein] + H2O = L-lysyl-[protein] + acetate. It carries out the reaction N(6)-(2E)-butenoyl-L-lysyl-[protein] + H2O = (2E)-2-butenoate + L-lysyl-[protein]. It catalyses the reaction N(6)-(2-hydroxyisobutanoyl)-L-lysyl-[protein] + H2O = 2-hydroxy-2-methylpropanoate + L-lysyl-[protein]. The enzyme catalyses N(6)-[(S)-lactoyl]-L-lysyl-[protein] + H2O = (S)-lactate + L-lysyl-[protein]. Inositol tetraphosphate (1D-myo-inositol 1,4,5,6-tetrakisphosphate) promotes the histone deacetylase activity by acting as an intermolecular glue between hdac3 and N-Cor repressor complex components. Its function is as follows. Histone deacetylase that catalyzes the deacetylation of lysine residues on the N-terminal part of the core histones (H2A, H2B, H3 and H4), and some other non-histone substrates. Histone deacetylation gives a tag for epigenetic repression and plays an important role in transcriptional regulation, cell cycle progression and developmental events. Histone deacetylases act via the formation of large multiprotein complexes, such as N-Cor repressor complex, which activate the histone deacetylase activity. Participates in the BCL6 transcriptional repressor activity by deacetylating the H3 'Lys-27' (H3K27) on enhancer elements, antagonizing EP300 acetyltransferase activity and repressing proximal gene expression. Also functions as a deacetylase for non-histone targets. In addition to protein deacetylase activity, also acts as a protein-lysine deacylase by recognizing other acyl groups: catalyzes removal of (2E)-butenoyl (crotonyl), lactoyl (lactyl) and 2-hydroxyisobutanoyl (2-hydroxyisobutyryl) acyl groups from lysine residues, leading to protein decrotonylation, delactylation and de-2-hydroxyisobutyrylation, respectively. This chain is Histone deacetylase 3 (hdac3), found in Xenopus tropicalis (Western clawed frog).